The primary structure comprises 274 residues: Putative ABC transporter ATP-binding protein MM_1037 (274 aa).

The ABC transporter domain occupies 2-235; sequence IRLENVSYCY…PSLKDLGLTP (234 aa). 35–42 contacts ATP; sequence GRNGSGKS.

This sequence belongs to the ABC transporter superfamily.

The protein localises to the cell membrane. Functionally, probably part of an ABC transporter complex. Responsible for energy coupling to the transport system. The protein is Putative ABC transporter ATP-binding protein MM_1037 of Methanosarcina mazei (strain ATCC BAA-159 / DSM 3647 / Goe1 / Go1 / JCM 11833 / OCM 88) (Methanosarcina frisia).